Reading from the N-terminus, the 177-residue chain is Probable nicotinate-nucleotide adenylyltransferase (177 aa).

It belongs to the NadD family.

It carries out the reaction nicotinate beta-D-ribonucleotide + ATP + H(+) = deamido-NAD(+) + diphosphate. Its pathway is cofactor biosynthesis; NAD(+) biosynthesis; deamido-NAD(+) from nicotinate D-ribonucleotide: step 1/1. Functionally, catalyzes the reversible adenylation of nicotinate mononucleotide (NaMN) to nicotinic acid adenine dinucleotide (NaAD). The protein is Probable nicotinate-nucleotide adenylyltransferase of Nitratiruptor sp. (strain SB155-2).